Here is a 472-residue protein sequence, read N- to C-terminus: Pentatricopeptide repeat-containing protein At3g18970 (472 aa).

PPR repeat units lie at residues 107 to 139 (NERTFVFVLGACARSASSSALRVGRIVHGMVKK), 146 to 180 (SELIGTTLLHFYAKNGDLRYARKVFDEMPERTSVT), 181 to 216 (WNAMIGGYCSHKDKGNHNARKAMVLFRRFSCCGSGV), 219 to 253 (TDTTMVCVLSAISQTGLLEIGSLVHGYIEKLGFTP), 256 to 286 (DVFIGTALVDMYSKCGCLNNAFSVFELMKVK), 287 to 321 (NVFTWTSMATGLALNGRGNETPNLLNRMAESGIKP), 322 to 352 (NEITFTSLLSAYRHIGLVEEGIELFKSMKTR), and 358 to 388 (VIEHYGCIVDLLGKAGRIQEAYQFILAMPIK). The type E motif; degenerate stretch occupies residues 393–472 (LLRSLCNACS…IKTRPGYSFV (80 aa)).

Belongs to the PPR family. PCMP-E subfamily.

This chain is Pentatricopeptide repeat-containing protein At3g18970 (PCMP-E93), found in Arabidopsis thaliana (Mouse-ear cress).